We begin with the raw amino-acid sequence, 545 residues long: Chaperonin GroEL (545 aa).

Residues 29–32, K50, 86–90, G413, and D495 contribute to the ATP site; these read TLGP and DGTTT.

This sequence belongs to the chaperonin (HSP60) family. Forms a cylinder of 14 subunits composed of two heptameric rings stacked back-to-back. Interacts with the co-chaperonin GroES.

It is found in the cytoplasm. It catalyses the reaction ATP + H2O + a folded polypeptide = ADP + phosphate + an unfolded polypeptide.. In terms of biological role, together with its co-chaperonin GroES, plays an essential role in assisting protein folding. The GroEL-GroES system forms a nano-cage that allows encapsulation of the non-native substrate proteins and provides a physical environment optimized to promote and accelerate protein folding. The polypeptide is Chaperonin GroEL (Borreliella afzelii (strain PKo) (Borrelia afzelii)).